A 354-amino-acid chain; its full sequence is S-adenosylmethionine:tRNA ribosyltransferase-isomerase (354 aa).

It belongs to the QueA family. As to quaternary structure, monomer.

Its subcellular location is the cytoplasm. The catalysed reaction is 7-aminomethyl-7-carbaguanosine(34) in tRNA + S-adenosyl-L-methionine = epoxyqueuosine(34) in tRNA + adenine + L-methionine + 2 H(+). It participates in tRNA modification; tRNA-queuosine biosynthesis. In terms of biological role, transfers and isomerizes the ribose moiety from AdoMet to the 7-aminomethyl group of 7-deazaguanine (preQ1-tRNA) to give epoxyqueuosine (oQ-tRNA). This chain is S-adenosylmethionine:tRNA ribosyltransferase-isomerase, found in Salmonella typhi.